Here is an 80-residue protein sequence, read N- to C-terminus: Cell division activator CedA (80 aa).

The protein belongs to the CedA family.

Its function is as follows. Activates the cell division inhibited by chromosomal DNA over-replication. This Salmonella arizonae (strain ATCC BAA-731 / CDC346-86 / RSK2980) protein is Cell division activator CedA.